The following is a 1414-amino-acid chain: DNA-directed RNA polymerase subunit beta' (1414 aa).

Residues cysteine 70, cysteine 72, cysteine 85, and cysteine 88 each coordinate Zn(2+). 3 residues coordinate Mg(2+): aspartate 460, aspartate 462, and aspartate 464. Residues cysteine 815, cysteine 889, cysteine 896, and cysteine 899 each coordinate Zn(2+). A disordered region spans residues 1395 to 1414 (EAEAQFADVSSTPDSDTDAS).

This sequence belongs to the RNA polymerase beta' chain family. In terms of assembly, the RNAP catalytic core consists of 2 alpha, 1 beta, 1 beta' and 1 omega subunit. When a sigma factor is associated with the core the holoenzyme is formed, which can initiate transcription. It depends on Mg(2+) as a cofactor. Zn(2+) serves as cofactor.

The enzyme catalyses RNA(n) + a ribonucleoside 5'-triphosphate = RNA(n+1) + diphosphate. Functionally, DNA-dependent RNA polymerase catalyzes the transcription of DNA into RNA using the four ribonucleoside triphosphates as substrates. The polypeptide is DNA-directed RNA polymerase subunit beta' (Janthinobacterium sp. (strain Marseille) (Minibacterium massiliensis)).